Reading from the N-terminus, the 475-residue chain is Glutamyl-tRNA(Gln) amidotransferase subunit A (475 aa).

Active-site charge relay system residues include Lys69 and Ser144. Ser168 serves as the catalytic Acyl-ester intermediate.

It belongs to the amidase family. GatA subfamily. In terms of assembly, heterotrimer of A, B and C subunits.

It carries out the reaction L-glutamyl-tRNA(Gln) + L-glutamine + ATP + H2O = L-glutaminyl-tRNA(Gln) + L-glutamate + ADP + phosphate + H(+). Its function is as follows. Allows the formation of correctly charged Gln-tRNA(Gln) through the transamidation of misacylated Glu-tRNA(Gln) in organisms which lack glutaminyl-tRNA synthetase. The reaction takes place in the presence of glutamine and ATP through an activated gamma-phospho-Glu-tRNA(Gln). The chain is Glutamyl-tRNA(Gln) amidotransferase subunit A from Methanosarcina barkeri (strain Fusaro / DSM 804).